The primary structure comprises 159 residues: MSYSITTPSQFVFLSSAWADPIELINLCTNALGNQFQTQQARTVVQRQFSEVWKPSPQVTVRFPDSDFKVYRYNAVLDPLVTALLGAFDTRNRIIEVENQANPTTAETLDATRRVDDATVAIRSAINNLIVELIRGTGSYNRSSFESSSGLVWTSGPAT.

Residue S2 is modified to N-acetylserine; by host.

This sequence belongs to the virgaviridae capsid protein family.

It is found in the virion. Its function is as follows. Capsid protein self-assembles to form rod-shaped virions about 18 nm in diameter with a central canal enclosing the viral genomic RNA. In Nicotiana tabacum (Common tobacco), this protein is Capsid protein (CP).